The following is a 76-amino-acid chain: Esculentin-2MT3 (76 aa).

The signal sequence occupies residues 1-22; the sequence is MFTLKKSMLLLFFLGTISLSLC. The propeptide at 23 to 37 is removed in mature form; the sequence is EEERNADEDDGEKEV. A disulfide bridge connects residues C70 and C76.

It belongs to the frog skin active peptide (FSAP) family. Esculentin subfamily. Expressed by the skin glands.

Its subcellular location is the secreted. Antimicrobial peptide. This chain is Esculentin-2MT3, found in Amolops mantzorum (Sichuan torrent frog).